A 338-amino-acid chain; its full sequence is Glycerol-3-phosphate dehydrogenase [NAD(P)+] (338 aa).

NADPH is bound by residues S13, W14, and K108. Positions 108, 139, and 141 each coordinate sn-glycerol 3-phosphate. A143 provides a ligand contact to NADPH. Sn-glycerol 3-phosphate is bound by residues K194, D247, S257, R258, and N259. Catalysis depends on K194, which acts as the Proton acceptor. NADPH is bound at residue R258. 2 residues coordinate NADPH: V282 and E284.

It belongs to the NAD-dependent glycerol-3-phosphate dehydrogenase family.

It localises to the cytoplasm. It carries out the reaction sn-glycerol 3-phosphate + NAD(+) = dihydroxyacetone phosphate + NADH + H(+). It catalyses the reaction sn-glycerol 3-phosphate + NADP(+) = dihydroxyacetone phosphate + NADPH + H(+). It participates in membrane lipid metabolism; glycerophospholipid metabolism. Catalyzes the reduction of the glycolytic intermediate dihydroxyacetone phosphate (DHAP) to sn-glycerol 3-phosphate (G3P), the key precursor for phospholipid synthesis. This chain is Glycerol-3-phosphate dehydrogenase [NAD(P)+], found in Streptococcus agalactiae serotype III (strain NEM316).